Reading from the N-terminus, the 71-residue chain is Small ribosomal subunit protein bS21 (71 aa).

The protein belongs to the bacterial ribosomal protein bS21 family.

This is Small ribosomal subunit protein bS21 from Buchnera aphidicola subsp. Acyrthosiphon pisum (strain 5A).